Consider the following 716-residue polypeptide: 1,4-alpha-glucan branching enzyme GlgB (716 aa).

Catalysis depends on Asp-398, which acts as the Nucleophile. Residue Glu-451 is the Proton donor of the active site.

This sequence belongs to the glycosyl hydrolase 13 family. GlgB subfamily. In terms of assembly, monomer.

The catalysed reaction is Transfers a segment of a (1-&gt;4)-alpha-D-glucan chain to a primary hydroxy group in a similar glucan chain.. Its pathway is glycan biosynthesis; glycogen biosynthesis. Catalyzes the formation of the alpha-1,6-glucosidic linkages in glycogen by scission of a 1,4-alpha-linked oligosaccharide from growing alpha-1,4-glucan chains and the subsequent attachment of the oligosaccharide to the alpha-1,6 position. This chain is 1,4-alpha-glucan branching enzyme GlgB, found in Nitrobacter winogradskyi (strain ATCC 25391 / DSM 10237 / CIP 104748 / NCIMB 11846 / Nb-255).